A 390-amino-acid polypeptide reads, in one-letter code: NADH-quinone oxidoreductase subunit H (390 aa).

9 consecutive transmembrane segments (helical) span residues 4–24 (WLLT…ALLT), 78–98 (LVYT…FGGI), 120–140 (VLAL…GGWA), 157–177 (MISY…LVGS), 191–211 (GWMI…SFAE), 247–266 (YVNM…GGWR), 278–298 (IADI…FVFI), 315–337 (FGWK…YIAF), and 341–360 (WGWW…LLAL).

This sequence belongs to the complex I subunit 1 family. In terms of assembly, NDH-1 is composed of 15 different subunits. Subunits NuoA, H, J, K, L, M, N constitute the membrane sector of the complex.

Its subcellular location is the cell membrane. It catalyses the reaction a quinone + NADH + 5 H(+)(in) = a quinol + NAD(+) + 4 H(+)(out). Its function is as follows. NDH-1 shuttles electrons from NADH, via FMN and iron-sulfur (Fe-S) centers, to quinones in the respiratory chain. The immediate electron acceptor for the enzyme in this species is believed to be ubiquinone. Couples the redox reaction to proton translocation (for every two electrons transferred, four hydrogen ions are translocated across the cytoplasmic membrane), and thus conserves the redox energy in a proton gradient. This subunit may bind ubiquinone. This chain is NADH-quinone oxidoreductase subunit H, found in Deinococcus deserti (strain DSM 17065 / CIP 109153 / LMG 22923 / VCD115).